The chain runs to 562 residues: Glutamate--tRNA ligase (562 aa).

The 'HIGH' region signature appears at 101–111; it reads PEPNGYPHIGH.

Belongs to the class-I aminoacyl-tRNA synthetase family. Glutamate--tRNA ligase type 2 subfamily.

It localises to the cytoplasm. It catalyses the reaction tRNA(Glu) + L-glutamate + ATP = L-glutamyl-tRNA(Glu) + AMP + diphosphate. Functionally, catalyzes the attachment of glutamate to tRNA(Glu) in a two-step reaction: glutamate is first activated by ATP to form Glu-AMP and then transferred to the acceptor end of tRNA(Glu). The protein is Glutamate--tRNA ligase of Cenarchaeum symbiosum (strain A).